Reading from the N-terminus, the 340-residue chain is L-threonine 3-dehydrogenase (340 aa).

C38 serves as a coordination point for Zn(2+). Residues T40 and H43 each act as charge relay system in the active site. H63, E64, C93, C96, C99, and C107 together coordinate Zn(2+). NAD(+) contacts are provided by residues I175, D195, R200, 261 to 263 (LGI), and 285 to 286 (IY).

The protein belongs to the zinc-containing alcohol dehydrogenase family. Homotetramer. It depends on Zn(2+) as a cofactor.

Its subcellular location is the cytoplasm. It carries out the reaction L-threonine + NAD(+) = (2S)-2-amino-3-oxobutanoate + NADH + H(+). The protein operates within amino-acid degradation; L-threonine degradation via oxydo-reductase pathway; glycine from L-threonine: step 1/2. Catalyzes the NAD(+)-dependent oxidation of L-threonine to 2-amino-3-ketobutyrate. This chain is L-threonine 3-dehydrogenase, found in Xanthomonas oryzae pv. oryzae (strain MAFF 311018).